Here is a 249-residue protein sequence, read N- to C-terminus: uncharacterized protein (249 aa).

A run of 2 helical transmembrane segments spans residues 49–69 (ILLS…CYLL) and 223–243 (IVMS…VHHL).

Its subcellular location is the cell membrane. This is an uncharacterized protein from Bacillus anthracis.